The chain runs to 248 residues: MENFKGLQKSLYIWTDSADLDKRVEQLKAATGGDVALENVHRLSFSSYANSSFDLIVIECAQLTDSYVKLLHMLKPSGKLHLVSYIGPAASLLQEIKLSGFINCREDSPDALTAEKPGYETGSSARLSFAKKNASAVNVWKISGDDEELIDEEELLDEEDKQKPDPAGLRVCSTTGKRKACKNCSCGLAEELETEKQSQKATENAKSSCGNCYLGDAFRCSTCPYLGMPAFKPGEKVQLADNLLKSDI.

Positions 4–129 (FKGLQKSLYI…ETGSSARLSF (126 aa)) are N-terminal SAM-like domain. A linker region spans residues 130-161 (AKKNASAVNVWKISGDDEELIDEEELLDEEDK). Residues cysteine 172, cysteine 181, cysteine 184, and cysteine 186 each contribute to the [2Fe-2S] cluster site. Positions 172 to 186 (CSTTGKRKACKNCSC) are fe-S binding site A. [4Fe-4S] cluster-binding residues include cysteine 209, cysteine 212, cysteine 220, and cysteine 223. 2 short sequence motifs (cx2C motif) span residues 209 to 212 (CGNC) and 220 to 223 (CSTC). A fe-S binding site B region spans residues 209–223 (CGNCYLGDAFRCSTC).

Belongs to the anamorsin family. Monomer. Requires [2Fe-2S] cluster as cofactor. [4Fe-4S] cluster is required as a cofactor.

The protein resides in the cytoplasm. Its subcellular location is the mitochondrion intermembrane space. Component of the cytosolic iron-sulfur (Fe-S) protein assembly (CIA) machinery. Required for the maturation of extramitochondrial Fe-S proteins. Part of an electron transfer chain functioning in an early step of cytosolic Fe-S biogenesis, facilitating the de novo assembly of a [4Fe-4S] cluster on the cytosolic Fe-S scaffold complex. Electrons are transferred from NADPH via a FAD- and FMN-containing diflavin oxidoreductase. Together with the diflavin oxidoreductase, also required for the assembly of the diferric tyrosyl radical cofactor of ribonucleotide reductase (RNR), probably by providing electrons for reduction during radical cofactor maturation in the catalytic small subunit. The sequence is that of Anamorsin homolog from Drosophila melanogaster (Fruit fly).